A 161-amino-acid chain; its full sequence is Small ribosomal subunit protein uS9 (161 aa).

The protein belongs to the universal ribosomal protein uS9 family.

This chain is Small ribosomal subunit protein uS9, found in Bartonella henselae (strain ATCC 49882 / DSM 28221 / CCUG 30454 / Houston 1) (Rochalimaea henselae).